We begin with the raw amino-acid sequence, 474 residues long: tRNA-2-methylthio-N(6)-dimethylallyladenosine synthase (474 aa).

In terms of domain architecture, MTTase N-terminal spans 3–120; it reads QKLHIKTWGC…LPEMINQIRG (118 aa). Positions 12, 49, 83, 157, 161, and 164 each coordinate [4Fe-4S] cluster. Residues 143–375 form the Radical SAM core domain; sequence RAEGPTAFVS…QERINQQAAQ (233 aa). The TRAM domain occupies 378-441; the sequence is RRMLGTEQRV…TNSLRGEVVR (64 aa).

Belongs to the methylthiotransferase family. MiaB subfamily. Monomer. It depends on [4Fe-4S] cluster as a cofactor.

Its subcellular location is the cytoplasm. The enzyme catalyses N(6)-dimethylallyladenosine(37) in tRNA + (sulfur carrier)-SH + AH2 + 2 S-adenosyl-L-methionine = 2-methylsulfanyl-N(6)-dimethylallyladenosine(37) in tRNA + (sulfur carrier)-H + 5'-deoxyadenosine + L-methionine + A + S-adenosyl-L-homocysteine + 2 H(+). Functionally, catalyzes the methylthiolation of N6-(dimethylallyl)adenosine (i(6)A), leading to the formation of 2-methylthio-N6-(dimethylallyl)adenosine (ms(2)i(6)A) at position 37 in tRNAs that read codons beginning with uridine. The protein is tRNA-2-methylthio-N(6)-dimethylallyladenosine synthase of Haemophilus influenzae (strain PittEE).